We begin with the raw amino-acid sequence, 283 residues long: MEERAVKLAVYGKGGIGKSTTSCNLSVALAKRGKKVLQIGCDPKHDSTFTLTGFLIPTIIDTLEAKGYHYEDIYPEDVIYRGYGGVDCVEAGGPPAGAGCGGYVVGETVKLLKELNAFDEYDVILFDVLGDVVCGGFAAPLNYADYCVIVTDNGFDALFAANRIAASVREKAKTRKLRLAGLIGNRTSKRDLIDQYVSAVPMPVLEVLPLVEDIRISRVKGKTLFEMAETDPSLEPVCQYYLNIADELLARPEGIVPRPAEDRELFALLSDFYKTPVREPALV.

Residues 15-20 (GIGKST) and Lys-44 contribute to the ATP site. A Mg(2+)-binding site is contributed by Ser-19. The [4Fe-4S] cluster site is built by Cys-100 and Cys-134. 185–186 (NR) contacts ATP.

This sequence belongs to the NifH/BchL/ChlL family. In terms of assembly, homodimer. Protochlorophyllide reductase is composed of three subunits; ChlL, ChlN and ChlB. The cofactor is [4Fe-4S] cluster.

It catalyses the reaction chlorophyllide a + oxidized 2[4Fe-4S]-[ferredoxin] + 2 ADP + 2 phosphate = protochlorophyllide a + reduced 2[4Fe-4S]-[ferredoxin] + 2 ATP + 2 H2O. The protein operates within porphyrin-containing compound metabolism; chlorophyll biosynthesis (light-independent). Component of the dark-operative protochlorophyllide reductase (DPOR) that uses Mg-ATP and reduced ferredoxin to reduce ring D of protochlorophyllide (Pchlide) to form chlorophyllide a (Chlide). This reaction is light-independent. The L component serves as a unique electron donor to the NB-component of the complex, and binds Mg-ATP. The sequence is that of Light-independent protochlorophyllide reductase iron-sulfur ATP-binding protein from Synechococcus sp. (strain JA-3-3Ab) (Cyanobacteria bacterium Yellowstone A-Prime).